The sequence spans 148 residues: Large ribosomal subunit protein bL9 (148 aa).

This sequence belongs to the bacterial ribosomal protein bL9 family.

Its function is as follows. Binds to the 23S rRNA. The protein is Large ribosomal subunit protein bL9 of Desulfitobacterium hafniense (strain DSM 10664 / DCB-2).